Reading from the N-terminus, the 122-residue chain is Large ribosomal subunit protein uL14 (122 aa).

It belongs to the universal ribosomal protein uL14 family. As to quaternary structure, part of the 50S ribosomal subunit. Forms a cluster with proteins L3 and L19. In the 70S ribosome, L14 and L19 interact and together make contacts with the 16S rRNA in bridges B5 and B8.

Functionally, binds to 23S rRNA. Forms part of two intersubunit bridges in the 70S ribosome. The polypeptide is Large ribosomal subunit protein uL14 (Agrobacterium fabrum (strain C58 / ATCC 33970) (Agrobacterium tumefaciens (strain C58))).